A 344-amino-acid chain; its full sequence is Methionine import ATP-binding protein MetN (344 aa).

An ABC transporter domain is found at 2–241 (IELQGLSQRF…PQHEVTRAMI (240 aa)). 38–45 (GRSGAGKS) serves as a coordination point for ATP.

This sequence belongs to the ABC transporter superfamily. Methionine importer (TC 3.A.1.24) family. In terms of assembly, the complex is composed of two ATP-binding proteins (MetN), two transmembrane proteins (MetI) and a solute-binding protein (MetQ).

The protein localises to the cell inner membrane. It catalyses the reaction L-methionine(out) + ATP + H2O = L-methionine(in) + ADP + phosphate + H(+). The enzyme catalyses D-methionine(out) + ATP + H2O = D-methionine(in) + ADP + phosphate + H(+). Its function is as follows. Part of the ABC transporter complex MetNIQ involved in methionine import. Responsible for energy coupling to the transport system. The sequence is that of Methionine import ATP-binding protein MetN from Cupriavidus metallidurans (strain ATCC 43123 / DSM 2839 / NBRC 102507 / CH34) (Ralstonia metallidurans).